Consider the following 718-residue polypeptide: Protein ENHANCED DISEASE RESISTANCE 2 (718 aa).

The PH domain occupies 3–110 (KVVYEGWMVR…WKEKIESVID (108 aa)). The disordered stretch occupies residues 134-174 (TGRTASSSDHESQFSAAEDEEDSRRSLMRRTTIGNGPPESV). Residues 180 to 392 (EFDAELANQN…VAGLREWFSQ (213 aa)) form the START domain. The disordered stretch occupies residues 437-483 (RNSLLMDEDSDDDDEFQIAESEQEPETSKPETDVKRPEEEPAHNIDL). The segment covering 442–461 (MDEDSDDDDEFQIAESEQEP) has biased composition (acidic residues). Over residues 462–479 (ETSKPETDVKRPEEEPAH) the composition is skewed to basic and acidic residues. The helical transmembrane segment at 664 to 684 (GVLGLVIGVITSLVVEMAFLV) threads the bilayer.

As to expression, expressed ubiquitously in all tissues and organs, including leaves, roots, flowers, stems and siliques.

Its subcellular location is the endoplasmic reticulum membrane. The protein localises to the cell membrane. It localises to the endosome membrane. Functionally, negative regulator of the salicylic acid- (SA-) mediated resistance to pathogens, including the biotrophic powdery mildew pathogens Golovinomyces cichoracearum and Blumeria graminis, and the downy mildew pathogen Hyaloperonospora parasitica, probably by limiting the initiation of cell death and the establishment of the hypersensitive response (HR). Prevents ethylene-induced senescence. Binds to phosphatidylinositol-4-phosphate (PtdIns(4)P) in vitro. This Arabidopsis thaliana (Mouse-ear cress) protein is Protein ENHANCED DISEASE RESISTANCE 2 (EDR2).